The chain runs to 307 residues: Ribulose bisphosphate carboxylase/oxygenase activase, chloroplastic (307 aa).

The N-terminal 46 residues, 1–46 (MSIPDDKEAGTIDEFLQKEGVLDILQKLDHDLVGLKPVKDRVREIA), are a transit peptide targeting the chloroplast. 73 to 80 (GSPGTGKT) contacts ATP.

The protein belongs to the CbxX/CfxQ family. Forms homooligomers. Forms heterohexameric rings with the plastid-encoded Rca subunit consisting of 3 of each nuclear- and plastidial-encoded subunits that alternate in the ring.

The protein resides in the plastid. Its subcellular location is the chloroplast. Required for the expression of ribulose 1,5-bisphosphate carboxylase/oxygenase (RuBisCo). ATPase involved in the activation of red-type RuBisCo, which tends to form inactive complexes with its substrate ribulose 1,5-bisphosphate (RuBP). Catalyzes the release of RuBP from inhibited RuBisCo in an ATP-dependent manner. Activation of RuBisCO involves the ATP-dependent carboxylation of the epsilon-amino group of lysine leading to a carbamate structure. The nuclear-encoded subunit plays a more critical role in activase function than the plastidial-encoded subunit. The sequence is that of Ribulose bisphosphate carboxylase/oxygenase activase, chloroplastic from Cyanidioschyzon merolae (strain NIES-3377 / 10D) (Unicellular red alga).